A 260-amino-acid chain; its full sequence is Alpha carbonic anhydrase 6 (260 aa).

The signal sequence occupies residues 1 to 28 (MDANTKTILFFVVFFIDLFSPNILFVYA). Residues 35 to 260 (PLFTYKQKTE…FVFVFWCMLM (226 aa)) enclose the Alpha-carbonic anhydrase domain. A disulfide bond links C60 and C215. Residue H100 is the Proton acceptor of the active site. H126 and H128 together coordinate Zn(2+). Residue N136 is glycosylated (N-linked (GlcNAc...) asparagine). A Zn(2+)-binding site is contributed by H145. Residue 211–212 (TI) coordinates substrate.

Belongs to the alpha-class carbonic anhydrase family. Zn(2+) is required as a cofactor. In terms of processing, N-glycosylated.

It localises to the plastid. It is found in the chloroplast stroma. The catalysed reaction is hydrogencarbonate + H(+) = CO2 + H2O. Its function is as follows. Reversible hydration of carbon dioxide. The protein is Alpha carbonic anhydrase 6 (ACA6) of Arabidopsis thaliana (Mouse-ear cress).